Consider the following 63-residue polypeptide: Conotoxin Gm5.1 (63 aa).

Positions 1–21 (MRYLPVFVILLLLIASIPSDT) are cleaved as a signal peptide. A propeptide spanning residues 22–50 (VQLKTKDDMPLASFHGNGRRILRMLSNKR) is cleaved from the precursor.

The protein belongs to the conotoxin T superfamily. Contains 2 disulfide bonds that can be either 'C1-C3, C2-C4' or 'C1-C4, C2-C3', since these disulfide connectivities have been observed for conotoxins with cysteine framework V (for examples, see AC P0DQQ7 and AC P81755). In terms of tissue distribution, expressed by the venom duct.

The protein localises to the secreted. The sequence is that of Conotoxin Gm5.1 from Conus gloriamaris (Glory-of-the-Sea cone).